Here is a 1074-residue protein sequence, read N- to C-terminus: Isoleucine--tRNA ligase (1074 aa).

Positions proline 50–threonine 60 match the 'HIGH' region motif. The 'KMSKS' region motif lies at glycine 605–serine 609. Residue lysine 608 coordinates ATP.

It belongs to the class-I aminoacyl-tRNA synthetase family. IleS type 2 subfamily. Monomer. The cofactor is Zn(2+).

It localises to the cytoplasm. The enzyme catalyses tRNA(Ile) + L-isoleucine + ATP = L-isoleucyl-tRNA(Ile) + AMP + diphosphate. In terms of biological role, catalyzes the attachment of isoleucine to tRNA(Ile). As IleRS can inadvertently accommodate and process structurally similar amino acids such as valine, to avoid such errors it has two additional distinct tRNA(Ile)-dependent editing activities. One activity is designated as 'pretransfer' editing and involves the hydrolysis of activated Val-AMP. The other activity is designated 'posttransfer' editing and involves deacylation of mischarged Val-tRNA(Ile). This is Isoleucine--tRNA ligase from Haloarcula marismortui (strain ATCC 43049 / DSM 3752 / JCM 8966 / VKM B-1809) (Halobacterium marismortui).